A 156-amino-acid polypeptide reads, in one-letter code: UPF0587 protein (156 aa).

Positions 32, 35, 64, and 67 each coordinate Zn(2+).

The protein belongs to the UPF0587 family.

The sequence is that of UPF0587 protein from Dictyostelium discoideum (Social amoeba).